Here is a 193-residue protein sequence, read N- to C-terminus: MQELEERIREQGVVKPGNVLKVDAFLNHQCDVRLFDHMGAAWAEHFNNKHITKILTIEASGIGIACVAATHFDDVPVVFAKKAQSINLDGEQYVTHVYSFTKQKEFPVIVSKKYLNAGDRVLLIDDFLANGKALNGLIELCESAGAIVEGIGIAIEKGFQGGGDALREAGYDLDSLAIVESMDAETGAIEFRH.

Residues leucine 20 and asparagine 27 each contribute to the xanthine site. 129–133 (ANGKA) is a binding site for 5-phospho-alpha-D-ribose 1-diphosphate. Position 157 (lysine 157) interacts with xanthine.

This sequence belongs to the purine/pyrimidine phosphoribosyltransferase family. Xpt subfamily. In terms of assembly, homodimer.

Its subcellular location is the cytoplasm. It catalyses the reaction XMP + diphosphate = xanthine + 5-phospho-alpha-D-ribose 1-diphosphate. The protein operates within purine metabolism; XMP biosynthesis via salvage pathway; XMP from xanthine: step 1/1. Converts the preformed base xanthine, a product of nucleic acid breakdown, to xanthosine 5'-monophosphate (XMP), so it can be reused for RNA or DNA synthesis. The protein is Xanthine phosphoribosyltransferase of Bifidobacterium animalis subsp. lactis (strain AD011).